The following is a 793-amino-acid chain: Probable alpha-fucosidase A (793 aa).

The N-terminal stretch at 1-20 (MLISGSSAALCALALPFAAA) is a signal peptide. 13 N-linked (GlcNAc...) asparagine glycosylation sites follow: N30, N83, N100, N104, N123, N179, N199, N234, N323, N597, N622, N660, and N757.

Belongs to the glycosyl hydrolase 95 family.

It localises to the secreted. It carries out the reaction an alpha-L-fucoside + H2O = L-fucose + an alcohol. Functionally, alpha-fucosidase involved in degradation of fucosylated xyloglucans. Hydrolyzes alpha-1,2-linked fucose. This is Probable alpha-fucosidase A (afcA) from Aspergillus niger (strain ATCC MYA-4892 / CBS 513.88 / FGSC A1513).